The sequence spans 114 residues: MENAFKSHLQFTEKAIKKIKNLIEIEKNHDLKLRIYINGGGCSGFQYQFIFDTSINEDDIIITQSEVSLIIDPISLQYLYGGQIDYLENLEGSKFIVSNPNAKNTCGCGSSFSI.

Residues Cys42, Cys106, and Cys108 each contribute to the iron-sulfur cluster site.

It belongs to the HesB/IscA family. As to quaternary structure, homodimer. Iron-sulfur cluster is required as a cofactor.

In terms of biological role, required for insertion of 4Fe-4S clusters for at least IspG. In Buchnera aphidicola subsp. Acyrthosiphon pisum (strain 5A), this protein is Iron-sulfur cluster insertion protein ErpA.